We begin with the raw amino-acid sequence, 264 residues long: Heavy metal-associated isoprenylated plant protein 17 (264 aa).

2 HMA domains span residues 32 to 95 (VTDA…KKIE) and 133 to 204 (IMEV…KERQ). Positions 185–218 (SRKLNKKMHQKIKKAEKERQEWESEMMLREAEEE) form a coiled coil. The residue at position 261 (Cys-261) is a Cysteine methyl ester. A lipid anchor (S-farnesyl cysteine) is attached at Cys-261. Positions 262–264 (SIS) are cleaved as a propeptide — removed in mature form.

It belongs to the HIPP family.

Its function is as follows. Probable heavy-metal-binding protein. The chain is Heavy metal-associated isoprenylated plant protein 17 from Arabidopsis thaliana (Mouse-ear cress).